The following is a 269-amino-acid chain: E3 ubiquitin-protein ligase complex slx8-rfp subunit slx8 (269 aa).

Basic and acidic residues predominate over residues 1–10 (MPPAHKRDTN). Disordered regions lie at residues 1 to 75 (MPPA…LNRA) and 166 to 196 (PRKQKFEQGKNPSTTNAEIEKEEPSKKQVVP). Over residues 60–70 (PSGTTSENESL) the composition is skewed to polar residues. The RING-type zinc-finger motif lies at 206–247 (CVICLDSPENLSCTPCGHIFCNFCILSALGTTAATQKCPVCR).

As to quaternary structure, part of an E3 ubiquitin complex including rfp1, rfp2 and slx8. Interacts with rfp1 and rfp2.

The protein resides in the nucleus. It catalyses the reaction S-ubiquitinyl-[E2 ubiquitin-conjugating enzyme]-L-cysteine + [acceptor protein]-L-lysine = [E2 ubiquitin-conjugating enzyme]-L-cysteine + N(6)-ubiquitinyl-[acceptor protein]-L-lysine.. It participates in protein modification; protein ubiquitination. Its function is as follows. Mediates ubiquitination and subsequent desumoylation/degradation of sumoylated proteins and proteins containing SUMO-like domains. Acts as a critical suppressor of gross chromosomal rearrangements (GCRs) during normal cell cycle progression. Involved in stabilizing, restarting or resolving transiently stalled replication forks. Prevents accumulation of DNA damage during cell cycle progression. The polypeptide is E3 ubiquitin-protein ligase complex slx8-rfp subunit slx8 (slx8) (Schizosaccharomyces pombe (strain 972 / ATCC 24843) (Fission yeast)).